A 61-amino-acid polypeptide reads, in one-letter code: Large ribosomal subunit protein eL37 (61 aa).

Cys19, Cys22, Cys34, and Cys37 together coordinate Zn(2+). A C4-type zinc finger spans residues 19–37; it reads CRRCGRNAYNVSKHYCAAC.

This sequence belongs to the eukaryotic ribosomal protein eL37 family. Zn(2+) serves as cofactor.

Functionally, binds to the 23S rRNA. The polypeptide is Large ribosomal subunit protein eL37 (rpl37e) (Saccharolobus solfataricus (strain ATCC 35092 / DSM 1617 / JCM 11322 / P2) (Sulfolobus solfataricus)).